The following is a 561-amino-acid chain: Lysine--tRNA ligase (561 aa).

Mg(2+)-binding residues include glutamate 409 and glutamate 416.

Belongs to the class-II aminoacyl-tRNA synthetase family. As to quaternary structure, homodimer. The cofactor is Mg(2+).

It is found in the cytoplasm. It catalyses the reaction tRNA(Lys) + L-lysine + ATP = L-lysyl-tRNA(Lys) + AMP + diphosphate. In Trichormus variabilis (strain ATCC 29413 / PCC 7937) (Anabaena variabilis), this protein is Lysine--tRNA ligase.